The primary structure comprises 675 residues: DNA ligase (675 aa).

NAD(+)-binding positions include 43-47 (DYEYD), 92-93 (SM), and E122. The N6-AMP-lysine intermediate role is filled by K124. Positions 145, 179, 295, and 319 each coordinate NAD(+). Zn(2+) is bound by residues C413, C416, C431, and C436. In terms of domain architecture, BRCT spans 597-675 (SPDGYYKGKK…ETEAIAKFEQ (79 aa)).

Belongs to the NAD-dependent DNA ligase family. LigA subfamily. It depends on Mg(2+) as a cofactor. Mn(2+) is required as a cofactor.

The enzyme catalyses NAD(+) + (deoxyribonucleotide)n-3'-hydroxyl + 5'-phospho-(deoxyribonucleotide)m = (deoxyribonucleotide)n+m + AMP + beta-nicotinamide D-nucleotide.. DNA ligase that catalyzes the formation of phosphodiester linkages between 5'-phosphoryl and 3'-hydroxyl groups in double-stranded DNA using NAD as a coenzyme and as the energy source for the reaction. It is essential for DNA replication and repair of damaged DNA. The protein is DNA ligase of Pediococcus pentosaceus (strain ATCC 25745 / CCUG 21536 / LMG 10740 / 183-1w).